The following is a 147-amino-acid chain: Large ribosomal subunit protein bL9 (147 aa).

It belongs to the bacterial ribosomal protein bL9 family.

Functionally, binds to the 23S rRNA. The polypeptide is Large ribosomal subunit protein bL9 (Thermodesulfovibrio yellowstonii (strain ATCC 51303 / DSM 11347 / YP87)).